The primary structure comprises 270 residues: Palmitoyltransferase ZDHHC12-A (270 aa).

The Cytoplasmic segment spans residues 1–8; that stretch reads MNKSLFKS. The helical transmembrane segment at 9 to 29 threads the bilayer; sequence GCLVRTAHVILTWIITLILFL. At 30–45 the chain is on the lumenal side; that stretch reads HNTDLRRCQERGDLLQ. The helical transmembrane segment at 46 to 66 threads the bilayer; that stretch reads PLVFSSVLLLSVLLYFTVSLM. Residues 67 to 145 are Cytoplasmic-facing; that stretch reads DPGFVLSDSQ…DNCVGELNHR (79 aa). Residues 102-152 form the DHHC domain; it reads RRCGYCFLLQPMRARHCKWCKRCVRRFDHHCPWIDNCVGELNHRWFLLYLC. C132 functions as the S-palmitoyl cysteine intermediate in the catalytic mechanism. Residues 146 to 166 form a helical membrane-spanning segment; that stretch reads WFLLYLCVQFTAVCWGLQSAW. Over 167–182 the chain is Lumenal; it reads SGFISAPSWQQWFTQN. A helical membrane pass occupies residues 183–203; that stretch reads VFLLVAFAVTAVFSVVLLLLL. Topologically, residues 204 to 270 are cytoplasmic; sequence CIHAYLASVN…MYIRHNNASV (67 aa).

This sequence belongs to the DHHC palmitoyltransferase family.

The protein localises to the golgi apparatus membrane. It localises to the endoplasmic reticulum membrane. The catalysed reaction is L-cysteinyl-[protein] + hexadecanoyl-CoA = S-hexadecanoyl-L-cysteinyl-[protein] + CoA. In terms of biological role, palmitoyltransferase that catalyzes the addition of palmitate onto various protein substrates. Has a palmitoyltransferase activity toward gephyrin/GPHN, regulating its clustering at synapses and its function in gamma-aminobutyric acid receptor clustering. Acts as an inhibitor of the NLRP3 inflammasome by mediating palmitoylation of NLRP3, thereby promoting NLRP3 degradation by the chaperone-mediated autophagy (CMA) process. This is Palmitoyltransferase ZDHHC12-A from Danio rerio (Zebrafish).